The primary structure comprises 254 residues: 3-deoxy-manno-octulosonate cytidylyltransferase (254 aa).

It belongs to the KdsB family.

The protein localises to the cytoplasm. It carries out the reaction 3-deoxy-alpha-D-manno-oct-2-ulosonate + CTP = CMP-3-deoxy-beta-D-manno-octulosonate + diphosphate. It participates in nucleotide-sugar biosynthesis; CMP-3-deoxy-D-manno-octulosonate biosynthesis; CMP-3-deoxy-D-manno-octulosonate from 3-deoxy-D-manno-octulosonate and CTP: step 1/1. The protein operates within bacterial outer membrane biogenesis; lipopolysaccharide biosynthesis. Functionally, activates KDO (a required 8-carbon sugar) for incorporation into bacterial lipopolysaccharide in Gram-negative bacteria. The polypeptide is 3-deoxy-manno-octulosonate cytidylyltransferase (Chlamydia felis (strain Fe/C-56) (Chlamydophila felis)).